Here is a 172-residue protein sequence, read N- to C-terminus: 6,7-dimethyl-8-ribityllumazine synthase (172 aa).

5-amino-6-(D-ribitylamino)uracil is bound by residues Phe24, 58 to 60 (ALE), and 82 to 84 (AVI). Position 87–88 (87–88 (ET)) interacts with (2S)-2-hydroxy-3-oxobutyl phosphate. Residue His90 is the Proton donor of the active site. Position 115 (Asn115) interacts with 5-amino-6-(D-ribitylamino)uracil. Arg129 is a (2S)-2-hydroxy-3-oxobutyl phosphate binding site. The disordered stretch occupies residues 150-172 (ALDQLGDDDEDEEEDEDDEEERA). Over residues 154-172 (LGDDDEDEEEDEDDEEERA) the composition is skewed to acidic residues.

The protein belongs to the DMRL synthase family.

The catalysed reaction is (2S)-2-hydroxy-3-oxobutyl phosphate + 5-amino-6-(D-ribitylamino)uracil = 6,7-dimethyl-8-(1-D-ribityl)lumazine + phosphate + 2 H2O + H(+). It participates in cofactor biosynthesis; riboflavin biosynthesis; riboflavin from 2-hydroxy-3-oxobutyl phosphate and 5-amino-6-(D-ribitylamino)uracil: step 1/2. In terms of biological role, catalyzes the formation of 6,7-dimethyl-8-ribityllumazine by condensation of 5-amino-6-(D-ribitylamino)uracil with 3,4-dihydroxy-2-butanone 4-phosphate. This is the penultimate step in the biosynthesis of riboflavin. The chain is 6,7-dimethyl-8-ribityllumazine synthase from Burkholderia multivorans (strain ATCC 17616 / 249).